The primary structure comprises 227 residues: Ion-translocating oxidoreductase complex subunit E (227 aa).

The next 6 helical transmembrane spans lie at 18-38 (ALVQ…VTNA), 39-59 (LGLG…VSLV), 69-89 (IPVF…LMNA), 93-113 (GLYL…IIIG), 125-145 (LPAV…LVLL), and 182-202 (HFLL…LIAL).

This sequence belongs to the NqrDE/RnfAE family. The complex is composed of six subunits: RnfA, RnfB, RnfC, RnfD, RnfE and RnfG.

The protein resides in the cell inner membrane. Its function is as follows. Part of a membrane-bound complex that couples electron transfer with translocation of ions across the membrane. This chain is Ion-translocating oxidoreductase complex subunit E, found in Aliivibrio fischeri (strain ATCC 700601 / ES114) (Vibrio fischeri).